The sequence spans 274 residues: MQQLQNIIETAFERRAEITPANADTVTREAVNQVISLLDSGALRVAEKIDGQWVTHQWLKKAVLLSFRINDNQVIEGAESRYFDKVPMKFADYDEARFQKEGFRVVPPAAVRQGAFIARNTVLMPSYVNIGAYVDEGTMVDTWATVGSCAQIGKNVHLSGGVGIGGVLEPLQANPTIIEDNCFIGARSEVVEGVIVEEGSVISMGVYIGQSTRIYDRETGEIHYGRVPAGSVVVSGNLPSKDGKYSLYCAVIVKKVDAKTRGKVGINELLRTID.

The protein belongs to the transferase hexapeptide repeat family.

Its subcellular location is the cytoplasm. It catalyses the reaction (S)-2,3,4,5-tetrahydrodipicolinate + succinyl-CoA + H2O = (S)-2-succinylamino-6-oxoheptanedioate + CoA. The protein operates within amino-acid biosynthesis; L-lysine biosynthesis via DAP pathway; LL-2,6-diaminopimelate from (S)-tetrahydrodipicolinate (succinylase route): step 1/3. This chain is 2,3,4,5-tetrahydropyridine-2,6-dicarboxylate N-succinyltransferase, found in Shigella boydii serotype 18 (strain CDC 3083-94 / BS512).